A 133-amino-acid chain; its full sequence is Small ribosomal subunit protein uS8 (133 aa).

It belongs to the universal ribosomal protein uS8 family. In terms of assembly, part of the 30S ribosomal subunit. Contacts proteins S5 and S12.

Its function is as follows. One of the primary rRNA binding proteins, it binds directly to 16S rRNA central domain where it helps coordinate assembly of the platform of the 30S subunit. The polypeptide is Small ribosomal subunit protein uS8 (Prochlorococcus marinus subsp. pastoris (strain CCMP1986 / NIES-2087 / MED4)).